The primary structure comprises 268 residues: Putative hydro-lyase PSPTO_5379 (268 aa).

It belongs to the D-glutamate cyclase family.

This chain is Putative hydro-lyase PSPTO_5379, found in Pseudomonas syringae pv. tomato (strain ATCC BAA-871 / DC3000).